Reading from the N-terminus, the 363-residue chain is Peptide chain release factor 2 (363 aa).

N5-methylglutamine is present on Gln251.

It belongs to the prokaryotic/mitochondrial release factor family. In terms of processing, methylated by PrmC. Methylation increases the termination efficiency of RF2.

It is found in the cytoplasm. Its function is as follows. Peptide chain release factor 2 directs the termination of translation in response to the peptide chain termination codons UGA and UAA. The chain is Peptide chain release factor 2 (prfB) from Helicobacter pylori (strain ATCC 700392 / 26695) (Campylobacter pylori).